The chain runs to 909 residues: SCY1-like protein 2 B (909 aa).

Residues 39-343 enclose the Protein kinase domain; sequence YELLDQIGSA…ALDFTGSNFF (305 aa). 7 HEAT repeats span residues 311 to 348, 350 to 382, 383 to 401, 402 to 439, 465 to 502, 499 to 537, and 578 to 617; these read SIPSELVSDLQRMLSTNESFRPTALDFTGSNFFRSDAR, RALRFLDHLLERDNMQKSEFLKALSDMWKDFDS, RVLRYKVLPPLCAELRNLV, LQPIILPMVLTIAQSQDRTDFELITLPALVPVLSTASG, VLPLLLRAYNDNDVRIQEEVLKRSTSVAKQLDGQVVRQ, VVRQAILPRVHGLALKTTVAAVRVNALLCLAELVQTLDK, and FTAEHVLTLMMPLLTAQQLNVQQFAKYMLFVKDILRKIEE. Disordered regions lie at residues 624–772 and 804–909; these read NDSG…VAST and SASL…LDLL. Composition is skewed to polar residues over residues 638–648, 678–712, 724–747, 804–828, and 835–852; these read NGLQFQSSTQI, PASSRHNTNDQFNKSTDQSQPSIMSTLPNKTTAPT, RQSSSLTAPATDNQTQLNTGTSFA, SASLSSLKPPQQGNQGISANNQDPL, and KQSQGMPSFTSGSYNNQK.

This sequence belongs to the protein kinase superfamily. Interacts with VTI11, VTI12 and CHC1. As to expression, expressed in roots, seedlings, leaves, stems, flowers, and, at low levels, in siliques.

It is found in the golgi apparatus membrane. The protein resides in the golgi apparatus. The protein localises to the trans-Golgi network membrane. It localises to the prevacuolar compartment membrane. Functionally, probably inactive kinase. Component of the AP2-containing clathrin coat that regulates clathrin-dependent trafficking at plasma membrane, TGN and endosomal system. Together with SCYL2B, required for cell growth, plant growth and development. Essential for polarized root hair development probably by mediating the root hair tip localization of cellulose synthase-like D3 (CSLD3). The chain is SCY1-like protein 2 B from Arabidopsis thaliana (Mouse-ear cress).